The primary structure comprises 107 residues: Pathogenesis-related protein PR-4 (107 aa).

In terms of domain architecture, Barwin spans 1–107 (QNINWDLRTA…VNYDFVDCGD (107 aa)). Disulfide bonds link C14–C46, C35–C69, and C49–C105.

In terms of tissue distribution, preferentially expressed in the tissue surrounding the abscission zone of fruitlets.

The protein resides in the secreted. It is found in the cell wall. May be involved in protecting plant tissues from pathogen infection. The chain is Pathogenesis-related protein PR-4 from Prunus persica (Peach).